Here is a 143-residue protein sequence, read N- to C-terminus: Large ribosomal subunit protein uL15 (143 aa).

Residues 1–54 (MELNSIKPAEGAKHAKRRVGRGIGSGLGKTAGRGHKGQKSRSGGYHKVGFEGGQ) form a disordered region. Gly residues predominate over residues 21–31 (RGIGSGLGKTA).

This sequence belongs to the universal ribosomal protein uL15 family. In terms of assembly, part of the 50S ribosomal subunit.

Its function is as follows. Binds to the 23S rRNA. The protein is Large ribosomal subunit protein uL15 of Paracidovorax citrulli (strain AAC00-1) (Acidovorax citrulli).